A 535-amino-acid polypeptide reads, in one-letter code: Ribonuclease Y (535 aa).

The helical transmembrane segment at 30-50 (IWALPALVIGLAIGAGIGILI) threads the bilayer. The region spanning 225–285 (TVSTVALPSE…VRREVARLAL (61 aa)) is the KH domain. One can recognise an HD domain in the interval 351 to 444 (VLQHSLECAL…VQAVDAISGG (94 aa)).

The protein belongs to the RNase Y family.

The protein resides in the cell membrane. In terms of biological role, endoribonuclease that initiates mRNA decay. The chain is Ribonuclease Y from Roseiflexus sp. (strain RS-1).